The chain runs to 1140 residues: Calcium-activated potassium channel slo-1 (1140 aa).

Residues 1-44 are Extracellular-facing; that stretch reads MGEIYSPSQSKGFNQPYGYPMNCNLSRVFMEMTEEDRKCLEERK. The helical transmembrane segment at 45 to 65 threads the bilayer; sequence YWCFLLSSITTFCASMILVVI. The Cytoplasmic portion of the chain corresponds to 66-139; sequence WRVVTHLCCQ…LISGQSLTGR (74 aa). The chain crosses the membrane as a helical span at residues 140 to 161; the sequence is FLVLLVFILSIGSLIIYFYDAS. The Extracellular portion of the chain corresponds to 162-178; it reads FQNFQVETCIPWQDSPS. A helical membrane pass occupies residues 179–199; that stretch reads QQIDLGFNIFFLVYFFIRFIA. The Cytoplasmic portion of the chain corresponds to 200–203; that stretch reads ASDK. A helical transmembrane segment spans residues 204-224; sequence VWFLLEMYSWIDFFTIPPSFV. At 225-228 the chain is on the extracellular side; that stretch reads AIYL. A helical; Voltage-sensor transmembrane segment spans residues 229–249; it reads QRNWLGFRFLRALRLMTVPDI. Residues 250-264 lie on the Cytoplasmic side of the membrane; that stretch reads LQYLNILKTSSSIRL. Residues 265–285 form a helical membrane-spanning segment; it reads TQLVTIFVAVCLTGAGLVHLL. At 286–299 the chain is on the extracellular side; sequence ENSGDFFKGFINPH. The pore-forming intramembrane region spans 300–322; the sequence is RITYADSVYFVLVTMSTVGYGDI. A Selectivity for potassium motif is present at residues 316–319; the sequence is TVGY. Over 323–331 the chain is Extracellular; the sequence is YCTTLCGRL. A helical transmembrane segment spans residues 332–352; sequence FMIFFILFGLAMFASYVPEIA. At 353-1140 the chain is on the cytoplasmic side; sequence DLIGNRQKYG…LEYEPGKRHF (788 aa). Residues 371–514 form the RCK N-terminal 1 domain; sequence KKHIVVCGHI…DWKRGDDVIC (144 aa). The interval 520 to 540 is segment S7; sequence LGFIAQSCLAPGFSTMMANLF. A segment S8 region spans residues 578–598; that stretch reads MTFPEAVDLLFNRLGLLLLAI. The segment S9 stretch occupies residues 797-817; it reads VLNGHVVVCLFADQDSPLIGL. One can recognise an RCK N-terminal 2 domain in the interval 799 to 953; sequence NGHVVVCLFA…GAKFGTNVPM (155 aa). The Calcium bowl signature appears at 955–977; sequence TELVNDSNVQFLDQDDDDDPDTE. Residues Gln964, Asp967, Asp970, and Asp972 each contribute to the Ca(2+) site. Positions 984–1004 are segment S10; it reads FACGTAFAISVLDSLMSTTYF.

Belongs to the potassium channel family. Calcium-activated (TC 1.A.1.3) subfamily. Slo sub-subfamily. In terms of assembly, homotetramer; which constitutes the calcium-activated potassium channel. In terms of processing, phosphorylated. In terms of tissue distribution, expressed in synaptic regions of the nervous system including in both the nerve ring and nerve cords, as well as in the body-wall and vulval muscle. Expressed broadly in motor neurons. Forms puncta at presynaptic terminals of neurons, muscle excitation sites, and in the dorsal nerve cord.

It is found in the cell membrane. Its subcellular location is the synapse. In terms of biological role, potassium channel activated by both membrane depolarization or increase in cytosolic Ca(2+) that mediates export of K(+). Its activation dampens the excitatory events that elevate the cytosolic Ca(2+) concentration and/or depolarize the cell membrane. It therefore contributes to repolarization of the membrane potential. Essential for the regulation of neurotransmitter release at synapses. Regulates longevity and age-associated decline in motor activity in mid-late life, by acting in motor neurons and through daf-16 in the intestine. When clustered in neurons, mediates ethanol-induced suppression of locomotory and egg-laying behaviors. The chain is Calcium-activated potassium channel slo-1 from Caenorhabditis elegans.